The chain runs to 315 residues: Homoserine kinase (315 aa).

Position 97–107 (97–107) interacts with ATP; that stretch reads PPARGLGSSAT.

The protein belongs to the GHMP kinase family. Homoserine kinase subfamily.

Its subcellular location is the cytoplasm. It catalyses the reaction L-homoserine + ATP = O-phospho-L-homoserine + ADP + H(+). It functions in the pathway amino-acid biosynthesis; L-threonine biosynthesis; L-threonine from L-aspartate: step 4/5. In terms of biological role, catalyzes the ATP-dependent phosphorylation of L-homoserine to L-homoserine phosphate. The protein is Homoserine kinase of Prochlorococcus marinus (strain MIT 9215).